The chain runs to 338 residues: Fructose-1,6-bisphosphatase class 1 1 (338 aa).

Mg(2+) contacts are provided by Glu-88, Asp-107, Leu-109, and Asp-110. Substrate is bound by residues 110-113 and Asn-196; that span reads DGSS. Residue Glu-268 participates in Mg(2+) binding.

The protein belongs to the FBPase class 1 family. Homotetramer. Requires Mg(2+) as cofactor.

It is found in the cytoplasm. The catalysed reaction is beta-D-fructose 1,6-bisphosphate + H2O = beta-D-fructose 6-phosphate + phosphate. It participates in carbohydrate biosynthesis; Calvin cycle. The sequence is that of Fructose-1,6-bisphosphatase class 1 1 from Bradyrhizobium sp. (strain BTAi1 / ATCC BAA-1182).